We begin with the raw amino-acid sequence, 573 residues long: Sulfate adenylyltransferase (573 aa).

The segment at 1 to 169 (MANSPHGGVL…LEAVNRLQHY (169 aa)) is N-terminal. Residues 170-394 (DFVELRYTPS…LRESHPPRSQ (225 aa)) are catalytic. Residue Gln-197 coordinates sulfate. Residues 197-200 (QTRN) and 291-294 (GRDH) each bind ATP. Catalysis depends on residues Thr-198, Arg-199, and Asn-200. Residue Arg-199 participates in sulfate binding. Ala-295 contributes to the sulfate binding site. Met-333 provides a ligand contact to ATP. The interval 395 to 573 (QGFTIFLTGY…LESQGLLDRF (179 aa)) is allosteric regulation domain; adenylyl-sulfate kinase-like. 3'-phosphoadenylyl sulfate is bound by residues 434 to 437 (ETVR), Arg-451, 477 to 478 (IA), and Arg-515.

The protein in the N-terminal section; belongs to the sulfate adenylyltransferase family. This sequence in the C-terminal section; belongs to the APS kinase family. Homohexamer. Dimer of trimers.

The protein localises to the cytoplasm. It catalyses the reaction sulfate + ATP + H(+) = adenosine 5'-phosphosulfate + diphosphate. Its pathway is sulfur metabolism; hydrogen sulfide biosynthesis; sulfite from sulfate: step 1/3. Its activity is regulated as follows. Allosterically inhibited by 3'-phosphoadenosine 5'-phosphosulfate (PAPS). In terms of biological role, catalyzes the first intracellular reaction of sulfate assimilation, forming adenosine-5'-phosphosulfate (APS) from inorganic sulfate and ATP. Plays an important role in sulfate activation as a component of the biosynthesis pathway of sulfur-containing amino acids. The protein is Sulfate adenylyltransferase of Chaetomium globosum (strain ATCC 6205 / CBS 148.51 / DSM 1962 / NBRC 6347 / NRRL 1970) (Soil fungus).